Consider the following 199-residue polypeptide: Charged multivesicular body protein 1b (199 aa).

2 coiled-coil regions span residues 15–42 and 178–199; these read AKEL…AIQK and TSVA…RDQV. Residues 167 to 199 are disordered; it reads ELPQGQTGSVGTSVASTEQDELSQRLARLRDQV. Residues 170 to 183 are compositionally biased toward polar residues; the sequence is QGQTGSVGTSVAST. The MIT-interacting motif motif lies at 186 to 196; the sequence is DELSQRLARLR.

The protein belongs to the SNF7 family.

It is found in the cytoplasm. Its subcellular location is the cytosol. The protein localises to the endosome. It localises to the late endosome membrane. In terms of biological role, probable peripherally associated component of the endosomal sorting required for transport complex III (ESCRT-III) which is involved in multivesicular bodies (MVBs) formation and sorting of endosomal cargo proteins into MVBs. MVBs contain intraluminal vesicles (ILVs) that are generated by invagination and scission from the limiting membrane of the endosome and mostly are delivered to lysosomes enabling degradation of membrane proteins, such as stimulated growth factor receptors, lysosomal enzymes and lipids. The polypeptide is Charged multivesicular body protein 1b (chmp1b) (Xenopus tropicalis (Western clawed frog)).